The chain runs to 985 residues: DNA ligase 4 (985 aa).

Disordered stretches follow at residues 1–27 (MDRL…RNKH) and 43–70 (LNGN…QTLS). Basic and acidic residues predominate over residues 10–20 (ETERELDEKYP). A compositionally biased stretch (basic residues) spans 46–61 (NKKRPTGPAAARKKLG). Positions 310, 312, 313, 317, 379, 420, 480, 485, 502, and 504 each coordinate ATP. The active-site N6-AMP-lysine intermediate is K312. E379 provides a ligand contact to Mg(2+). Mg(2+) is bound at residue E480. BRCT domains are found at residues 711–804 (PSGH…PDLL) and 878–983 (LRGW…RFAP).

The protein belongs to the ATP-dependent DNA ligase family. Requires Mg(2+) as cofactor.

The protein resides in the nucleus. The catalysed reaction is ATP + (deoxyribonucleotide)n-3'-hydroxyl + 5'-phospho-(deoxyribonucleotide)m = (deoxyribonucleotide)n+m + AMP + diphosphate.. In terms of biological role, DNA ligase involved in DNA non-homologous end joining (NHEJ); required for double-strand break (DSB) repair. This chain is DNA ligase 4 (LIG4), found in Coccidioides immitis (strain RS) (Valley fever fungus).